The sequence spans 82 residues: Small ribosomal subunit protein bS16 (82 aa).

The protein belongs to the bacterial ribosomal protein bS16 family.

The sequence is that of Small ribosomal subunit protein bS16 from Desulfosudis oleivorans (strain DSM 6200 / JCM 39069 / Hxd3) (Desulfococcus oleovorans).